A 96-amino-acid polypeptide reads, in one-letter code: MLKTLENLQLFAHKKGGGSTSNGRDSQAKRLGAKAADGQTVSGGSILYRQRGTHIYPGVNVGRGGDDTLFAKVEGVVRFERKGRDKKQVSVYPVAK.

A propeptide spanning residues M1 to F11 is cleaved from the precursor. The interval H13–A36 is disordered.

It belongs to the bacterial ribosomal protein bL27 family. The N-terminus is cleaved by ribosomal processing cysteine protease Prp.

The sequence is that of Large ribosomal subunit protein bL27 from Streptococcus thermophilus (strain CNRZ 1066).